The sequence spans 41 residues: Large ribosomal subunit protein bL36 (41 aa).

Belongs to the bacterial ribosomal protein bL36 family.

The polypeptide is Large ribosomal subunit protein bL36 (Chelativorans sp. (strain BNC1)).